The following is a 229-amino-acid chain: Phosphoglycolate phosphatase (229 aa).

Residue Asp18 is the Nucleophile of the active site. 3 residues coordinate Mg(2+): Asp18, Asp20, and Asp176.

This sequence belongs to the HAD-like hydrolase superfamily. CbbY/CbbZ/Gph/YieH family. Mg(2+) serves as cofactor.

It carries out the reaction 2-phosphoglycolate + H2O = glycolate + phosphate. It functions in the pathway organic acid metabolism; glycolate biosynthesis; glycolate from 2-phosphoglycolate: step 1/1. Its function is as follows. Specifically catalyzes the dephosphorylation of 2-phosphoglycolate. Is involved in the dissimilation of the intracellular 2-phosphoglycolate formed during the DNA repair of 3'-phosphoglycolate ends, a major class of DNA lesions induced by oxidative stress. The chain is Phosphoglycolate phosphatase from Xylella fastidiosa (strain Temecula1 / ATCC 700964).